The chain runs to 317 residues: Forkhead box protein B2 (317 aa).

A DNA-binding region (fork-head) is located at residues 13–107 (KPPYSYISLT…ENGSFLRRRK (95 aa)).

First expressed within the dorsolateral ectoderm, except for the organizer territory. During gastrulation, expressed in 2 ectodermal stripes adjacent to the dorsal midline. With the onset of neurulation, expression shifts first to the neural plate before settling on the bottom of the neural tube, on top of the notochord. Expression is then absent until stage 35, at which stage a pair of cells in the fourth rhombomere in the dorsolateral outer area of the rhombencephalon show expression. This is followed shortly afterwards by expression in a pair of cells in rhombomere 6 at the ventricular side of the rhombencephalon.

It is found in the nucleus. Its function is as follows. Transcription factor. The sequence is that of Forkhead box protein B2 from Xenopus laevis (African clawed frog).